We begin with the raw amino-acid sequence, 1717 residues long: Protein MON2 homolog (1717 aa).

S2 bears the N-acetylserine mark. Phosphoserine is present on residues S205 and S537. The interval E511 to D538 is disordered. Positions S522 to D538 are enriched in polar residues.

The protein belongs to the MON2 family. Homooligomer. Heterotrimer with ATP9A and DOP1B; this interaction is retromer-independent. Interacts with SNX3.

It is found in the early endosome membrane. Plays a role in regulating membrane trafficking of cargo proteins. Together with ATP9A and DOP1B, regulates SNX3 retromer-mediated endosomal sorting of WLS away from lysosomal degradation. The sequence is that of Protein MON2 homolog from Homo sapiens (Human).